The chain runs to 169 residues: Peptide methionine sulfoxide reductase MsrA (169 aa).

Cysteine 10 is a catalytic residue.

Belongs to the MsrA Met sulfoxide reductase family.

The enzyme catalyses L-methionyl-[protein] + [thioredoxin]-disulfide + H2O = L-methionyl-(S)-S-oxide-[protein] + [thioredoxin]-dithiol. The catalysed reaction is [thioredoxin]-disulfide + L-methionine + H2O = L-methionine (S)-S-oxide + [thioredoxin]-dithiol. Functionally, has an important function as a repair enzyme for proteins that have been inactivated by oxidation. Catalyzes the reversible oxidation-reduction of methionine sulfoxide in proteins to methionine. This is Peptide methionine sulfoxide reductase MsrA from Streptococcus pyogenes serotype M2 (strain MGAS10270).